A 1922-amino-acid polypeptide reads, in one-letter code: Kinesin-related protein 4 (1922 aa).

A Kinesin motor domain is found at 22–343 (KIKVAIRVRP…LQFAKRAKRV (322 aa)). Residue 101 to 108 (GQTSSGKT) participates in ATP binding. Residues 448–538 (QKIKKIKNSE…DDEFKDNLNL (91 aa)) form a disordered region. Residues 456 to 468 (SENNISSSSSNSS) are compositionally biased toward low complexity. 2 stretches are compositionally biased toward acidic residues: residues 469–480 (GEEDDDDKDDEN) and 488–532 (DKDD…DDEF). The stretch at 562–1712 (QVKVKREDLD…ELESTKQKNL (1151 aa)) forms a coiled coil. The tract at residues 1887 to 1922 (TSTDNLTTTSTSLKSKSSSNGENKENQNNNIIIKNN) is disordered.

The protein belongs to the TRAFAC class myosin-kinesin ATPase superfamily. Kinesin family.

Its subcellular location is the cytoplasm. The protein localises to the cytoskeleton. In terms of biological role, microtubule-associated force-producing protein that plays a role in organelle transport. Its motor activity is directed toward the microtubule's plus end. Cooperates with dynein in organizing spindle assembly during cell division. The protein is Kinesin-related protein 4 (kif4) of Dictyostelium discoideum (Social amoeba).